The chain runs to 549 residues: MLHQKLNPTSSEDLTIDVDLLYETDPCELKLDEMIEAEPEPEMIEGLPASDALTPADRYLELFEHVQSTKLFPDSKTFPDCAPKMDPLDILIRYRKVRRHRDFDLRRFVENHFWLPETLSSEYVSNPENSLKEHIDQLWPILTREPQDHIPWSSLLALPQSYIVPGGRFSETYYWDSYFTMLGLAESGREDLLKCMADNFAWMIENYGHIPNGNRTYYLSRSQPPVFALMVELFEEDGVRGARRYLDHLKMEYAFWMDGAESLALNQAYRHVVRMPDGSLLNRYWDDRDTPRDESWLEDVETAKHSGRPPNEVYRDLRAGAASGWDYSSRWLRDAGRLASIRTTQFIPIDLNAFLYKLESAIANISALKGERDTEALFRQKASDRRAAVNHYLWDDENGCYRDYDWRREEMALFSAASIVPLYVGMANHEQADRLANVVRSRLLTPGGIMATEYETGEQWDKPNGWAPLQWMAIQGFKLYGDDMLGDEIAHNWLKTVNHFYQEHHKLIEKYHISGGTPREGGGGEYPLQDGFGWTNGVVRRLIGLYGEP.

Substrate contacts are provided by residues Arg168, Trp175–Asp176, Asn212, Arg221–Gln223, Arg292–Glu294, and Gly324. Residues Asp326 and Glu509 each act as proton donor/acceptor in the active site. Glu525 is a substrate binding site.

The protein belongs to the glycosyl hydrolase 37 family. Monomer.

It localises to the cytoplasm. The catalysed reaction is alpha,alpha-trehalose + H2O = alpha-D-glucose + beta-D-glucose. The protein operates within glycan degradation; trehalose degradation; D-glucose from alpha,alpha-trehalose: step 1/1. In terms of biological role, hydrolyzes trehalose to glucose. Could be involved, in cells returning to low osmolarity conditions, in the utilization of the accumulated cytoplasmic trehalose, which was synthesized in response to high osmolarity. This chain is Cytoplasmic trehalase, found in Salmonella arizonae (strain ATCC BAA-731 / CDC346-86 / RSK2980).